A 355-amino-acid polypeptide reads, in one-letter code: C-C chemokine receptor type 1 (355 aa).

The Extracellular portion of the chain corresponds to 1-34 (MEISDFTEAYPTTTEFDYGDSTPCQKTAVRAFGA). Residues 35–60 (GLLPPLYSLVFIIGVVGNVLVILVLM) traverse the membrane as a helical segment. Topologically, residues 61-64 (QHRR) are cytoplasmic. A helical membrane pass occupies residues 65 to 91 (LQSMTSIYLFNLAVSDLVFLFTLPFWI). At 92 to 107 (DYKLKDDWIFGDAMCK) the chain is on the extracellular side. Cys-106 and Cys-183 are disulfide-bonded. A helical membrane pass occupies residues 108-129 (LLSGFYYLGLYSEIFFIILLTI). At 130-146 (DRYLAIVHAVFALRART) the chain is on the cytoplasmic side. The helical transmembrane segment at 147-171 (VTFGIITSIITWALAILASMPALYF) threads the bilayer. Residues 172–197 (FKAQWEFTHRTCSPHFPYKSLKQWKR) are Extracellular-facing. Residues 198-223 (FQALKLNLLGLILPLLVMIICYAGII) traverse the membrane as a helical segment. Residues 224-239 (RILLRRPSEKKVKAVR) are Cytoplasmic-facing. A helical membrane pass occupies residues 240-264 (LIFAITLLFFLLWTPYNLSVFVSAF). Residues 265–281 (QDVLFTNQCEQSKQLDL) are Extracellular-facing. The helical transmembrane segment at 282 to 305 (AMQVTEVIAYTHCCVNPIIYVFVG) threads the bilayer. The Cytoplasmic portion of the chain corresponds to 306 to 355 (ERFWKYLRQLFQRHVAIPLAKWLPFLSVDQLERTSSISPSTGEHELSAGF).

It belongs to the G-protein coupled receptor 1 family. In terms of assembly, interacts with CREB3. Interacts with CCL3. Interacts with CCL15. Interacts with CCL23. Interacts with GNAI1. Interacts with PF4/CXCL4. In terms of tissue distribution, detected in the heart, spleen, lung, peritoneal exudate cells and leukocytes.

The protein resides in the cell membrane. In terms of biological role, chemokine receptor that plays a crucial role in regulating immune cell migration, inflammation, and immune responses. Contributes to the inflammatory response by recruiting immune cells, such as monocytes, macrophages, T-cells, and dendritic cells, to sites of inflammation for the clearance of pathogens and the resolution of tissue damage. When activated by its ligands including CCL3, CCL5-9, CCL13-16 and CCL23, triggers a signaling cascade within immune cells, leading to their migration towards the source of the chemokine. For example, mediates neutrophil migration after activation by CCL3 leading to the sequential release of TNF-alpha and leukotriene B4. Also mediates monocyte migration upon CXCL4 binding. Activation by CCL5 results in neuroinflammation through the ERK1/2 signaling pathway. This chain is C-C chemokine receptor type 1 (Ccr1), found in Mus musculus (Mouse).